The chain runs to 427 residues: Enolase (427 aa).

Position 163 (Q163) interacts with (2R)-2-phosphoglycerate. The Proton donor role is filled by E205. Mg(2+) contacts are provided by D242, E288, and D315. Residues K340, R369, S370, and K391 each contribute to the (2R)-2-phosphoglycerate site. K340 (proton acceptor) is an active-site residue.

The protein belongs to the enolase family. The cofactor is Mg(2+).

It is found in the cytoplasm. The protein localises to the secreted. The protein resides in the cell surface. The catalysed reaction is (2R)-2-phosphoglycerate = phosphoenolpyruvate + H2O. It functions in the pathway carbohydrate degradation; glycolysis; pyruvate from D-glyceraldehyde 3-phosphate: step 4/5. Catalyzes the reversible conversion of 2-phosphoglycerate (2-PG) into phosphoenolpyruvate (PEP). It is essential for the degradation of carbohydrates via glycolysis. The protein is Enolase of Cytophaga hutchinsonii (strain ATCC 33406 / DSM 1761 / CIP 103989 / NBRC 15051 / NCIMB 9469 / D465).